The following is a 361-amino-acid chain: tRNA 2-selenouridine synthase (361 aa).

Residues 11–134 form the Rhodanese domain; the sequence is LIADTPLIDV…LRQTAIQATW (124 aa). Cys-94 (S-selanylcysteine intermediate) is an active-site residue.

Belongs to the SelU family. As to quaternary structure, monomer.

It catalyses the reaction 5-methylaminomethyl-2-thiouridine(34) in tRNA + selenophosphate + (2E)-geranyl diphosphate + H2O + H(+) = 5-methylaminomethyl-2-selenouridine(34) in tRNA + (2E)-thiogeraniol + phosphate + diphosphate. The catalysed reaction is 5-methylaminomethyl-2-thiouridine(34) in tRNA + (2E)-geranyl diphosphate = 5-methylaminomethyl-S-(2E)-geranyl-thiouridine(34) in tRNA + diphosphate. The enzyme catalyses 5-methylaminomethyl-S-(2E)-geranyl-thiouridine(34) in tRNA + selenophosphate + H(+) = 5-methylaminomethyl-2-(Se-phospho)selenouridine(34) in tRNA + (2E)-thiogeraniol. It carries out the reaction 5-methylaminomethyl-2-(Se-phospho)selenouridine(34) in tRNA + H2O = 5-methylaminomethyl-2-selenouridine(34) in tRNA + phosphate. In terms of biological role, involved in the post-transcriptional modification of the uridine at the wobble position (U34) of tRNA(Lys), tRNA(Glu) and tRNA(Gln). Catalyzes the conversion of 2-thiouridine (S2U-RNA) to 2-selenouridine (Se2U-RNA). Acts in a two-step process involving geranylation of 2-thiouridine (S2U) to S-geranyl-2-thiouridine (geS2U) and subsequent selenation of the latter derivative to 2-selenouridine (Se2U) in the tRNA chain. The polypeptide is tRNA 2-selenouridine synthase (Salmonella arizonae (strain ATCC BAA-731 / CDC346-86 / RSK2980)).